We begin with the raw amino-acid sequence, 404 residues long: Pectate lyase E (404 aa).

An N-terminal signal peptide occupies residues 1–41; the sequence is MNNSRMSSVSTQKTTGRSALGTKSALAAIIATTMMVSVASA. Ca(2+) is bound by residues D182 and D225. The active site involves R278.

The protein belongs to the polysaccharide lyase 1 family. PLBC subfamily. Ca(2+) serves as cofactor.

The protein localises to the secreted. It catalyses the reaction Eliminative cleavage of (1-&gt;4)-alpha-D-galacturonan to give oligosaccharides with 4-deoxy-alpha-D-galact-4-enuronosyl groups at their non-reducing ends.. It participates in glycan metabolism; pectin degradation; 2-dehydro-3-deoxy-D-gluconate from pectin: step 2/5. In terms of biological role, involved in maceration and soft-rotting of plant tissue. Pectate lyases have been implicated as pathogenicity factors which induce maceration or rotting of plant tissue. PelE is sufficient to induce these effects under laboratory conditions. The chain is Pectate lyase E (pelE) from Dickeya chrysanthemi (Pectobacterium chrysanthemi).